Consider the following 381-residue polypeptide: L-lactate dehydrogenase (381 aa).

Residues 1–380 (MIISASTDYR…SADSLVRELG (380 aa)) enclose the FMN hydroxy acid dehydrogenase domain. Tyr-24 is a binding site for substrate. Residues Ser-106 and Gln-127 each contribute to the FMN site. Position 129 (Tyr-129) interacts with substrate. Thr-155 contacts FMN. Residue Arg-164 participates in substrate binding. An FMN-binding site is contributed by Lys-251. His-275 (proton acceptor) is an active-site residue. Residue Arg-278 coordinates substrate. Position 306–330 (306–330 (DSGIRTGLDVVRMIALGADSVLLGR)) interacts with FMN.

This sequence belongs to the FMN-dependent alpha-hydroxy acid dehydrogenase family. In terms of assembly, homotetramer. It depends on FMN as a cofactor.

It localises to the cell inner membrane. The catalysed reaction is (S)-lactate + A = pyruvate + AH2. Catalyzes the conversion of L-lactate to pyruvate. Is coupled to the respiratory chain. This chain is L-lactate dehydrogenase, found in Pseudomonas aeruginosa (strain UCBPP-PA14).